Reading from the N-terminus, the 427-residue chain is ATP synthase subunit beta (427 aa).

160–167 contributes to the ATP binding site; it reads GGAGVGKT.

This sequence belongs to the ATPase alpha/beta chains family. In terms of assembly, F-type ATPases have 2 components, CF(1) - the catalytic core - and CF(0) - the membrane proton channel. CF(1) has five subunits: alpha(3), beta(3), gamma(1), delta(1), epsilon(1). CF(0) has three main subunits: a(1), b(2) and c(9-12). The alpha and beta chains form an alternating ring which encloses part of the gamma chain. CF(1) is attached to CF(0) by a central stalk formed by the gamma and epsilon chains, while a peripheral stalk is formed by the delta and b chains.

It localises to the cell membrane. The catalysed reaction is ATP + H2O + 4 H(+)(in) = ADP + phosphate + 5 H(+)(out). Produces ATP from ADP in the presence of a proton gradient across the membrane. The catalytic sites are hosted primarily by the beta subunits. This Peptococcus niger protein is ATP synthase subunit beta.